A 269-amino-acid polypeptide reads, in one-letter code: Zinc import ATP-binding protein ZnuC (269 aa).

An ABC transporter domain is found at 6 to 221 (VRLTQVGVSF…PAFVELFGQD (216 aa)). 38-45 (GPNGAGKT) serves as a coordination point for ATP.

The protein belongs to the ABC transporter superfamily. Zinc importer (TC 3.A.1.15.5) family. The complex is composed of two ATP-binding proteins (ZnuC), two transmembrane proteins (ZnuB) and a solute-binding protein (ZnuA).

It localises to the cell inner membrane. The enzyme catalyses Zn(2+)(out) + ATP(in) + H2O(in) = Zn(2+)(in) + ADP(in) + phosphate(in) + H(+)(in). Part of the ABC transporter complex ZnuABC involved in zinc import. Responsible for energy coupling to the transport system. The sequence is that of Zinc import ATP-binding protein ZnuC from Pseudomonas aeruginosa (strain UCBPP-PA14).